A 485-amino-acid polypeptide reads, in one-letter code: Aspartyl/glutamyl-tRNA(Asn/Gln) amidotransferase subunit B (485 aa).

This sequence belongs to the GatB/GatE family. GatB subfamily. As to quaternary structure, heterotrimer of A, B and C subunits.

It carries out the reaction L-glutamyl-tRNA(Gln) + L-glutamine + ATP + H2O = L-glutaminyl-tRNA(Gln) + L-glutamate + ADP + phosphate + H(+). The catalysed reaction is L-aspartyl-tRNA(Asn) + L-glutamine + ATP + H2O = L-asparaginyl-tRNA(Asn) + L-glutamate + ADP + phosphate + 2 H(+). Its function is as follows. Allows the formation of correctly charged Asn-tRNA(Asn) or Gln-tRNA(Gln) through the transamidation of misacylated Asp-tRNA(Asn) or Glu-tRNA(Gln) in organisms which lack either or both of asparaginyl-tRNA or glutaminyl-tRNA synthetases. The reaction takes place in the presence of glutamine and ATP through an activated phospho-Asp-tRNA(Asn) or phospho-Glu-tRNA(Gln). The sequence is that of Aspartyl/glutamyl-tRNA(Asn/Gln) amidotransferase subunit B from Borrelia turicatae (strain 91E135).